Consider the following 311-residue polypeptide: MANPLYQKHIISINDLSRDDLNLVLATAAKLKANPQPELLKHKVIASCFFEASTRTRLSFETSMHRLSASVVGFSDSANTSLGKKGETLADTISVISTYVDAIVMRHPQEGAARLATEFSGQVPVLNAGDGSNQHPTQTLLDLFTIQETQGRLDNLHIAMVGDLKYGRTVHSLTQALAKFSGNRFYFIAPDALAMPQYILDMLDEKGMAWSLHGSIEEVMADVDILYMTRVQKERLDPSEYANVKAQFVLRASDLNGARENMKVLHPLPRIDEITTDVDKTPHAWYFQQAGNGIFARQALLALVLNSELSL.

Carbamoyl phosphate-binding residues include arginine 55 and threonine 56. Lysine 85 contacts L-aspartate. Carbamoyl phosphate is bound by residues arginine 106, histidine 135, and glutamine 138. Residues arginine 168 and arginine 230 each coordinate L-aspartate. The carbamoyl phosphate site is built by leucine 268 and proline 269.

The protein belongs to the aspartate/ornithine carbamoyltransferase superfamily. ATCase family. In terms of assembly, heterododecamer (2C3:3R2) of six catalytic PyrB chains organized as two trimers (C3), and six regulatory PyrI chains organized as three dimers (R2).

The enzyme catalyses carbamoyl phosphate + L-aspartate = N-carbamoyl-L-aspartate + phosphate + H(+). Its pathway is pyrimidine metabolism; UMP biosynthesis via de novo pathway; (S)-dihydroorotate from bicarbonate: step 2/3. Its function is as follows. Catalyzes the condensation of carbamoyl phosphate and aspartate to form carbamoyl aspartate and inorganic phosphate, the committed step in the de novo pyrimidine nucleotide biosynthesis pathway. In Salmonella dublin (strain CT_02021853), this protein is Aspartate carbamoyltransferase catalytic subunit.